Consider the following 123-residue polypeptide: UPF0295 protein Bcer98_0460 (123 aa).

2 helical membrane-spanning segments follow: residues isoleucine 12–phenylalanine 32 and phenylalanine 43–methionine 63.

It belongs to the UPF0295 family.

The protein resides in the cell membrane. The sequence is that of UPF0295 protein Bcer98_0460 from Bacillus cytotoxicus (strain DSM 22905 / CIP 110041 / 391-98 / NVH 391-98).